Here is a 618-residue protein sequence, read N- to C-terminus: DNA mismatch repair protein MutL (618 aa).

This sequence belongs to the DNA mismatch repair MutL/HexB family.

Its function is as follows. This protein is involved in the repair of mismatches in DNA. It is required for dam-dependent methyl-directed DNA mismatch repair. May act as a 'molecular matchmaker', a protein that promotes the formation of a stable complex between two or more DNA-binding proteins in an ATP-dependent manner without itself being part of a final effector complex. The sequence is that of DNA mismatch repair protein MutL from Porphyromonas gingivalis (strain ATCC BAA-308 / W83).